The chain runs to 173 residues: Ribosome maturation factor RimM (173 aa).

Residues 96-169 (PDEFYDHQLE…LITIDPPDGL (74 aa)) enclose the PRC barrel domain.

The protein belongs to the RimM family. As to quaternary structure, binds ribosomal protein uS19.

It is found in the cytoplasm. Functionally, an accessory protein needed during the final step in the assembly of 30S ribosomal subunit, possibly for assembly of the head region. Essential for efficient processing of 16S rRNA. May be needed both before and after RbfA during the maturation of 16S rRNA. It has affinity for free ribosomal 30S subunits but not for 70S ribosomes. The polypeptide is Ribosome maturation factor RimM (Mycolicibacterium gilvum (strain PYR-GCK) (Mycobacterium gilvum (strain PYR-GCK))).